The primary structure comprises 275 residues: Large ribosomal subunit protein uL2 (275 aa).

The disordered stretch occupies residues 221-275 (RGMTMNPVDHPMGGGEGRSKGHIPQSPWGIPAKGYKTRKSKKPSDKLIVKRRKQK).

It belongs to the universal ribosomal protein uL2 family. Part of the 50S ribosomal subunit. Forms a bridge to the 30S subunit in the 70S ribosome.

Functionally, one of the primary rRNA binding proteins. Required for association of the 30S and 50S subunits to form the 70S ribosome, for tRNA binding and peptide bond formation. It has been suggested to have peptidyltransferase activity; this is somewhat controversial. Makes several contacts with the 16S rRNA in the 70S ribosome. The sequence is that of Large ribosomal subunit protein uL2 from Kosmotoga olearia (strain ATCC BAA-1733 / DSM 21960 / TBF 19.5.1).